A 465-amino-acid polypeptide reads, in one-letter code: Glycine--tRNA ligase (465 aa).

Residues Arg-98 and Glu-174 each coordinate substrate. ATP-binding positions include 206–208, 216–221, 290–291, and 334–337; these read RNE, FRTREF, EL, and GADR. 221-225 lines the substrate pocket; that stretch reads FEQME. Residue 330–334 coordinates substrate; that stretch reads EPSLG.

The protein belongs to the class-II aminoacyl-tRNA synthetase family. Homodimer.

It localises to the cytoplasm. It catalyses the reaction tRNA(Gly) + glycine + ATP = glycyl-tRNA(Gly) + AMP + diphosphate. In terms of biological role, catalyzes the attachment of glycine to tRNA(Gly). In Agathobacter rectalis (strain ATCC 33656 / DSM 3377 / JCM 17463 / KCTC 5835 / VPI 0990) (Eubacterium rectale), this protein is Glycine--tRNA ligase.